The chain runs to 253 residues: Indole-3-glycerol phosphate synthase (253 aa).

Belongs to the TrpC family.

It carries out the reaction 1-(2-carboxyphenylamino)-1-deoxy-D-ribulose 5-phosphate + H(+) = (1S,2R)-1-C-(indol-3-yl)glycerol 3-phosphate + CO2 + H2O. Its pathway is amino-acid biosynthesis; L-tryptophan biosynthesis; L-tryptophan from chorismate: step 4/5. In Bacillus cereus (strain ATCC 10987 / NRS 248), this protein is Indole-3-glycerol phosphate synthase.